Here is a 305-residue protein sequence, read N- to C-terminus: GMP synthase [glutamine-hydrolyzing] subunit B (305 aa).

Residues 2 to 184 (VKPEKFIPKA…LQLPEEICER (183 aa)) form the GMPS ATP-PPase domain. Residue 29 to 35 (SGGVDSS) coordinates ATP.

Heterodimer composed of a glutamine amidotransferase subunit (A) and a GMP-binding subunit (B).

The enzyme catalyses XMP + L-glutamine + ATP + H2O = GMP + L-glutamate + AMP + diphosphate + 2 H(+). The protein operates within purine metabolism; GMP biosynthesis; GMP from XMP (L-Gln route): step 1/1. Functionally, catalyzes the synthesis of GMP from XMP. This chain is GMP synthase [glutamine-hydrolyzing] subunit B (guaAB), found in Methanosarcina acetivorans (strain ATCC 35395 / DSM 2834 / JCM 12185 / C2A).